The primary structure comprises 514 residues: uncharacterized protein (514 aa).

Over residues 1 to 15 the composition is skewed to low complexity; it reads MSSPRGASSMSSRSP. A disordered region spans residues 1–22; the sequence is MSSPRGASSMSSRSPVNLEPES.

This is an uncharacterized protein from Ictaluridae (bullhead catfishes).